Reading from the N-terminus, the 135-residue chain is Snaclec rhodocetin subunit gamma (135 aa).

Intrachain disulfides connect C4-C15, C32-C129, and C104-C121. One can recognise a C-type lectin domain in the interval 11 to 130 (YDQHCYQAFN…CQAKNPFVCK (120 aa)).

Belongs to the snaclec family. As to quaternary structure, heterotetramer of subunit alpha, beta, gamma and delta; only the gamma and the delta subunits are disulfide-linked. Alpha-beta heterodimer and gamma-delta heterodimer associate orthogonally, giving a cruciform conformation. This heterotetramer may covalently dimerizes thanks to the gamma subunit. Expressed by the venom gland.

It is found in the secreted. Its function is as follows. Potent inhibitor of collagen-induced platelet aggregation. It acts by binding to the integrin alpha2A domain and blocks collagen binding to integrin alpha-2/beta-1 (ITGA2/ITGB1). The gamma/delta subunits mainly contribute to this activity. This is Snaclec rhodocetin subunit gamma from Calloselasma rhodostoma (Malayan pit viper).